Reading from the N-terminus, the 122-residue chain is Gene 20 protein (122 aa).

This is Gene 20 protein (20) from Mycobacterium phage D29 (Mycobacteriophage D29).